The sequence spans 34 residues: Photosystem I reaction center subunit XII (34 aa).

The helical transmembrane segment at 10 to 32 (IFIALVVAAHAGVLAVRLCVSLY) threads the bilayer.

The protein belongs to the PsaM family.

It localises to the cellular thylakoid membrane. The protein is Photosystem I reaction center subunit XII of Synechococcus sp. (strain WH7803).